The sequence spans 692 residues: Epithelial sodium channel subunit alpha (692 aa).

Positions 1–67 are disordered; the sequence is MSSIKGNKLE…PAAPQQPTAE (67 aa). At 1-108 the chain is on the cytoplasmic side; the sequence is MSSIKGNKLE…CSQHNRMKTA (108 aa). Residues 56 to 65 show a composition bias toward low complexity; it reads PEPAAPQQPT. Residues 109-129 form a helical membrane-spanning segment; the sequence is FWAVLWLCTFGMMYWQFGLLF. Residues 130-585 lie on the Extracellular side of the membrane; sequence GEYFSYPVSL…SQWSLWFGSS (456 aa). 10 cysteine pairs are disulfide-bonded: Cys-156-Cys-328, Cys-252-Cys-259, Cys-305-Cys-312, Cys-417-Cys-502, Cys-439-Cys-479, Cys-439-Cys-498, Cys-443-Cys-494, Cys-452-Cys-479, Cys-452-Cys-502, and Cys-454-Cys-468. Positions 198 to 266 are gating release of inhibition by proteolysis (GRIP); protease-sensitive region that is responsible for the proteolytic activation of the channel; it reads RSRRDLRGTL…SDCFYQTYSS (69 aa). Residues 586-606 traverse the membrane as a helical segment; that stretch reads VLSVVEMAELIFDLLVITFLM. The Cytoplasmic portion of the chain corresponds to 607 to 692; it reads LLRRFRSRYW…GSSACPLGGP (86 aa). Positions 627-692 are disordered; the sequence is EVASTLASSP…GSSACPLGGP (66 aa). A compositionally biased stretch (polar residues) spans 628–637; it reads VASTLASSPP. Over residues 653–666 the composition is skewed to pro residues; it reads GPAPSPALTAPPPA. Positions 663 to 667 match the PY motif; recruits WW domain-containing proteins and is thereby required for ubiquitination and inhibition of the channel by NEDD4 and NEDD4L motif; the sequence is PPPAY. Over residues 682–692 the composition is skewed to low complexity; it reads AGSSACPLGGP.

This sequence belongs to the amiloride-sensitive sodium channel (TC 1.A.6) family. SCNN1A subfamily. In terms of assembly, heterotrimer; containing an alpha/SCNN1A, a beta/SCNN1B and a gamma/SCNN1G subunit. Interacts with WWP1 (via WW domains). Interacts with WWP2 (via WW domains); inhibits the channel. Interacts with BPIFA1; the interaction is indirect via SCNN1B and inhibits the proteolytic processing of SCNN1A and SCNN1G and the activation of ENaC. Interacts with the full-length immature form of PCSK9 (pro-PCSK9). In terms of processing, ubiquitinated. Can be ubiquitinated at multiple sites and undergo monoubiquitination and polyubiquitination. Ubiquitination by NEDD4 or NEDD4L inhibits the ENaC channel through endocytosis, intracellular retention and degradation of its individual subunits. Post-translationally, N-glycosylated. ENaC is activated through the proteolytic maturation of its subunits. Furin cleaves the SCNN1A subunit, which results in a stepwise increase in the open probability of the channel due to the release of an inhibitory tract. BPIFA1, which is recruited by the SCNN1B subunit, prevents the proteolytic activation of ENaC.

Its subcellular location is the apical cell membrane. It localises to the cell projection. It is found in the cilium. The protein localises to the cytoplasmic granule. The protein resides in the cytoplasm. Its subcellular location is the cytoplasmic vesicle. It localises to the secretory vesicle. It is found in the acrosome. The protein localises to the flagellum. The catalysed reaction is Na(+)(in) = Na(+)(out). Its activity is regulated as follows. Originally identified and characterized by its inhibition by the diuretic drug amiloride. Functionally, this is one of the three pore-forming subunits of the heterotrimeric epithelial sodium channel (ENaC), a critical regulator of sodium balance and fluid homeostasis. ENaC operates in epithelial tissues, where it mediates the electrodiffusion of sodium ions from extracellular fluid through the apical membrane of cells, with water following osmotically. It plays a key role in maintaining sodium homeostasis through electrogenic sodium reabsorption in the kidneys. Additionally, ENaC is essential for airway surface liquid homeostasis, which is crucial for proper mucus clearance. This Pan troglodytes (Chimpanzee) protein is Epithelial sodium channel subunit alpha.